Reading from the N-terminus, the 307-residue chain is 4-hydroxythreonine-4-phosphate dehydrogenase (307 aa).

The substrate site is built by histidine 121 and threonine 122. Residues histidine 150, histidine 189, and histidine 245 each coordinate a divalent metal cation. Positions 253, 262, and 271 each coordinate substrate.

It belongs to the PdxA family. As to quaternary structure, homodimer. Zn(2+) is required as a cofactor. Requires Mg(2+) as cofactor. Co(2+) serves as cofactor.

It is found in the cytoplasm. The catalysed reaction is 4-(phosphooxy)-L-threonine + NAD(+) = 3-amino-2-oxopropyl phosphate + CO2 + NADH. Its pathway is cofactor biosynthesis; pyridoxine 5'-phosphate biosynthesis; pyridoxine 5'-phosphate from D-erythrose 4-phosphate: step 4/5. Catalyzes the NAD(P)-dependent oxidation of 4-(phosphooxy)-L-threonine (HTP) into 2-amino-3-oxo-4-(phosphooxy)butyric acid which spontaneously decarboxylates to form 3-amino-2-oxopropyl phosphate (AHAP). The protein is 4-hydroxythreonine-4-phosphate dehydrogenase of Sulfurimonas denitrificans (strain ATCC 33889 / DSM 1251) (Thiomicrospira denitrificans (strain ATCC 33889 / DSM 1251)).